We begin with the raw amino-acid sequence, 295 residues long: Pyridoxal 5'-phosphate synthase subunit PdxS (295 aa).

A D-ribose 5-phosphate-binding site is contributed by aspartate 25. The Schiff-base intermediate with D-ribose 5-phosphate role is filled by lysine 82. Glycine 154 contributes to the D-ribose 5-phosphate binding site. Arginine 166 is a D-glyceraldehyde 3-phosphate binding site. D-ribose 5-phosphate-binding positions include glycine 215 and 236–237 (GS).

The protein belongs to the PdxS/SNZ family. In terms of assembly, in the presence of PdxT, forms a dodecamer of heterodimers.

It catalyses the reaction aldehydo-D-ribose 5-phosphate + D-glyceraldehyde 3-phosphate + L-glutamine = pyridoxal 5'-phosphate + L-glutamate + phosphate + 3 H2O + H(+). It participates in cofactor biosynthesis; pyridoxal 5'-phosphate biosynthesis. Its function is as follows. Catalyzes the formation of pyridoxal 5'-phosphate from ribose 5-phosphate (RBP), glyceraldehyde 3-phosphate (G3P) and ammonia. The ammonia is provided by the PdxT subunit. Can also use ribulose 5-phosphate and dihydroxyacetone phosphate as substrates, resulting from enzyme-catalyzed isomerization of RBP and G3P, respectively. In Heliobacterium modesticaldum (strain ATCC 51547 / Ice1), this protein is Pyridoxal 5'-phosphate synthase subunit PdxS.